Reading from the N-terminus, the 487-residue chain is Probable cytochrome P450 513B1 (487 aa).

The helical transmembrane segment at 1–18 threads the bilayer; sequence MNLLVLSVILAIIIYLIF. Residue Cys433 participates in heme binding.

This sequence belongs to the cytochrome P450 family. Heme is required as a cofactor.

It localises to the membrane. The chain is Probable cytochrome P450 513B1 (cyp513B1) from Dictyostelium discoideum (Social amoeba).